The sequence spans 391 residues: Histidinol-phosphate aminotransferase (391 aa).

Position 245 is an N6-(pyridoxal phosphate)lysine (Lys-245).

It belongs to the class-II pyridoxal-phosphate-dependent aminotransferase family. Histidinol-phosphate aminotransferase subfamily. Homodimer. Pyridoxal 5'-phosphate serves as cofactor.

It catalyses the reaction L-histidinol phosphate + 2-oxoglutarate = 3-(imidazol-4-yl)-2-oxopropyl phosphate + L-glutamate. It functions in the pathway amino-acid biosynthesis; L-histidine biosynthesis; L-histidine from 5-phospho-alpha-D-ribose 1-diphosphate: step 7/9. The polypeptide is Histidinol-phosphate aminotransferase (Bifidobacterium adolescentis (strain ATCC 15703 / DSM 20083 / NCTC 11814 / E194a)).